A 370-amino-acid chain; its full sequence is Versatile peroxidase VPS1 (370 aa).

Positions Met1 to Gly20 are cleaved as a signal peptide. Positions Glu21 to Arg31 are excised as a propeptide. Cystine bridges form between Cys34–Cys46, Cys45–Cys315, Cys65–Cys151, and Cys279–Cys344. Mn(2+) contacts are provided by Glu67 and Glu71. His78 functions as the Proton acceptor in the catalytic mechanism. 4 residues coordinate Ca(2+): Asp79, Gly97, Asp99, and Ser101. Asn133 carries an N-linked (GlcNAc...) asparagine glycan. Trp201 acts as the Tryptophan radical intermediate in catalysis. Residue His206 coordinates heme b. Thr207 provides a ligand contact to Ca(2+). Ala210–Val214 serves as a coordination point for heme b. Asp212 lines the Mn(2+) pocket. The Ca(2+) site is built by Asp224, Thr226, Thr229, and Asp231.

The protein belongs to the peroxidase family. Ligninase subfamily. Heme b is required as a cofactor. Ca(2+) serves as cofactor.

It is found in the secreted. It carries out the reaction 1-(4-hydroxy-3-methoxyphenyl)-2-(2-methoxyphenoxy)propane-1,3-diol + H2O2 = guaiacol + vanillin + glycolaldehyde + H2O. The catalysed reaction is 2 Mn(2+) + H2O2 + 2 H(+) = 2 Mn(3+) + 2 H2O. Functionally, a versatile ligninolytic peroxidase that combines the substrate specificity characteristics of the two other ligninolytic peroxidases, manganese peroxidase and lignin peroxidase. The chain is Versatile peroxidase VPS1 (vps1) from Pleurotus eryngii (Boletus of the steppes).